The chain runs to 65 residues: Large ribosomal subunit protein bL35 (65 aa).

It belongs to the bacterial ribosomal protein bL35 family.

This Desulfitobacterium hafniense (strain DSM 10664 / DCB-2) protein is Large ribosomal subunit protein bL35.